The chain runs to 375 residues: DNA replication and repair protein RecF (375 aa).

30 to 37 contributes to the ATP binding site; sequence GENAQGKT.

Belongs to the RecF family.

It is found in the cytoplasm. The RecF protein is involved in DNA metabolism; it is required for DNA replication and normal SOS inducibility. RecF binds preferentially to single-stranded, linear DNA. It also seems to bind ATP. In Enterococcus faecalis (strain ATCC 700802 / V583), this protein is DNA replication and repair protein RecF.